A 318-amino-acid polypeptide reads, in one-letter code: Homoserine kinase (318 aa).

97-107 (PIGSGLGSSAC) contacts ATP.

It belongs to the GHMP kinase family. Homoserine kinase subfamily.

It is found in the cytoplasm. It catalyses the reaction L-homoserine + ATP = O-phospho-L-homoserine + ADP + H(+). The protein operates within amino-acid biosynthesis; L-threonine biosynthesis; L-threonine from L-aspartate: step 4/5. In terms of biological role, catalyzes the ATP-dependent phosphorylation of L-homoserine to L-homoserine phosphate. The sequence is that of Homoserine kinase from Vibrio vulnificus (strain CMCP6).